A 479-amino-acid polypeptide reads, in one-letter code: Aspartyl/glutamyl-tRNA(Asn/Gln) amidotransferase subunit B (479 aa).

It belongs to the GatB/GatE family. GatB subfamily. Heterotrimer of A, B and C subunits.

It carries out the reaction L-glutamyl-tRNA(Gln) + L-glutamine + ATP + H2O = L-glutaminyl-tRNA(Gln) + L-glutamate + ADP + phosphate + H(+). It catalyses the reaction L-aspartyl-tRNA(Asn) + L-glutamine + ATP + H2O = L-asparaginyl-tRNA(Asn) + L-glutamate + ADP + phosphate + 2 H(+). Its function is as follows. Allows the formation of correctly charged Asn-tRNA(Asn) or Gln-tRNA(Gln) through the transamidation of misacylated Asp-tRNA(Asn) or Glu-tRNA(Gln) in organisms which lack either or both of asparaginyl-tRNA or glutaminyl-tRNA synthetases. The reaction takes place in the presence of glutamine and ATP through an activated phospho-Asp-tRNA(Asn) or phospho-Glu-tRNA(Gln). The protein is Aspartyl/glutamyl-tRNA(Asn/Gln) amidotransferase subunit B of Myxococcus xanthus (strain DK1622).